We begin with the raw amino-acid sequence, 48 residues long: Protein YodE (48 aa).

This Escherichia coli (strain K12) protein is Protein YodE.